The primary structure comprises 1693 residues: 1-phosphatidylinositol 4,5-bisphosphate phosphodiesterase eta-1 (1693 aa).

Positions 20–128 constitute a PH domain; sequence SVMQSGTQMI…WITGLKYLMA (109 aa). 3 consecutive EF-hand domains span residues 142–177, 178–214, and 226–246; these read THDQ…LNVN, LPRR…MSLR, and DKKD…EQKM. Ca(2+) contacts are provided by Asp155, Asn157, Asp159, and Glu166. The region spanning 299–444 is the PI-PLC X-box domain; that stretch reads QDMDQPLCNY…LKGKILVKGK (146 aa). His314 is an active-site residue. Positions 315, 344, and 346 each coordinate Ca(2+). His358 is an active-site residue. Glu393 is a Ca(2+) binding site. Substrate contacts are provided by Lys442 and Lys444. A disordered region spans residues 526-585; it reads LNAHLKQSPDVKESGKKSHGRSLMTNFGKHKKTTKSRSKSYSTDDEEDTQQSTGKEGGQL. A compositionally biased stretch (basic and acidic residues) spans 532-541; the sequence is QSPDVKESGK. A compositionally biased stretch (basic residues) spans 553-563; sequence GKHKKTTKSRS. Residues 601–714 form the PI-PLC Y-box domain; the sequence is LSDLVVYTNS…GYVLKPQQMC (114 aa). Residues Ser627 and Arg654 each coordinate substrate. In terms of domain architecture, C2 spans 715-843; that stretch reads KGTFNPFSGD…PGYRHVYLEG (129 aa). Ile758, Asp760, Asp784, Asp813, His814, and Asp815 together coordinate Ca(2+). Positions 992–1005 are enriched in basic and acidic residues; that stretch reads IEGKENSLAEDKDG. Disordered regions lie at residues 992 to 1014, 1052 to 1089, 1300 to 1329, and 1578 to 1613; these read IEGK…ASIK, TGEQ…PKQH, LESN…ETLK, and LSSR…GAGV. Polar residues predominate over residues 1065 to 1086; the sequence is RTTSNATSNCQENPCPSKSLSP. Positions 1592–1601 are enriched in basic and acidic residues; the sequence is RAKEKQEANK.

Requires Ca(2+) as cofactor. As to expression, expressed in brain and to a lower extent in lung. In brain, it is found in cerebrum, cerebellum and spinal cord. In embryo expressed in the notochord, developing spinal cord (in a ventral to dorsal gradient), dorsal root ganglia, cerebellum and dermatomyosome.

Its subcellular location is the cytoplasm. The protein resides in the membrane. It carries out the reaction a 1,2-diacyl-sn-glycero-3-phospho-(1D-myo-inositol-4,5-bisphosphate) + H2O = 1D-myo-inositol 1,4,5-trisphosphate + a 1,2-diacyl-sn-glycerol + H(+). In terms of biological role, the production of the second messenger molecules diacylglycerol (DAG) and inositol 1,4,5-trisphosphate (IP3) is mediated by calcium-activated phosphatidylinositol-specific phospholipase C enzymes. The protein is 1-phosphatidylinositol 4,5-bisphosphate phosphodiesterase eta-1 of Homo sapiens (Human).